The chain runs to 78 residues: Small ribosomal subunit protein bS18B (78 aa).

The protein belongs to the bacterial ribosomal protein bS18 family. In terms of assembly, part of the 30S ribosomal subunit. Forms a tight heterodimer with protein bS6.

Its function is as follows. Binds as a heterodimer with protein bS6 to the central domain of the 16S rRNA, where it helps stabilize the platform of the 30S subunit. The chain is Small ribosomal subunit protein bS18B from Streptomyces griseus subsp. griseus (strain JCM 4626 / CBS 651.72 / NBRC 13350 / KCC S-0626 / ISP 5235).